A 455-amino-acid polypeptide reads, in one-letter code: Elongation factor Tu, mitochondrial (455 aa).

A mitochondrion-targeting transit peptide spans 1–46; that stretch reads MTTMAAATLLRATPHFSGLAAGRTFLLQGLLRLLKAPALPLLCRGL. The tr-type G domain occupies 58-254; sequence KPHVNVGTIG…AVDTYIPVPA (197 aa). The interval 67–74 is G1; it reads GHVDHGKT. GTP-binding residues include Asp70, Gly72, Lys73, Thr74, and Thr75. Thr74 contacts Mg(2+). Lys82 bears the N6-acetyllysine mark. At Lys91 the chain carries N6-acetyllysine; alternate. An N6-succinyllysine; alternate modification is found at Lys91. The tract at residues 108–112 is G2; the sequence is GITIN. A G3 region spans residues 129 to 132; that stretch reads DCPG. GTP contacts are provided by Asn184, Asp187, Ser222, Ala223, and Leu224. Residues 184-187 form a G4 region; the sequence is NKAD. Residues 222–224 form a G5 region; it reads SAL. Lys237 is subject to N6-succinyllysine. At Lys259 the chain carries N6-acetyllysine. Thr281 carries the phosphothreonine modification. The residue at position 289 (Lys289) is an N6-succinyllysine. Phosphoserine is present on Ser315. 2 positions are modified to N6-acetyllysine: Lys364 and Lys421.

It belongs to the TRAFAC class translation factor GTPase superfamily. Classic translation factor GTPase family. EF-Tu/EF-1A subfamily. As to quaternary structure, interacts with NLRX1. Interacts with ATG16L1. (Microbial infection) Interacts with human parainfluenza virus 3 matrix protein; this interaction inhibits RLR-mediated type I interferon production while promoting autophagy. In terms of assembly, (Microbial infection) Interacts with Hantaan hantavirus glycoprotein N; this interaction contributes to the virus-induced degradation of mitochondria by autophagy, which leads to degradation of MAVS and inhibition of type I interferon (IFN) responses.

It is found in the mitochondrion. The catalysed reaction is GTP + H2O = GDP + phosphate + H(+). Functionally, GTP hydrolase that promotes the GTP-dependent binding of aminoacyl-tRNA to the A-site of ribosomes during protein biosynthesis. Also plays a role in the regulation of autophagy and innate immunity. Recruits ATG5-ATG12 and NLRX1 at mitochondria and serves as a checkpoint of the RIGI-MAVS pathway. In turn, inhibits RLR-mediated type I interferon while promoting autophagy. The polypeptide is Elongation factor Tu, mitochondrial (TUFM) (Homo sapiens (Human)).